A 229-amino-acid polypeptide reads, in one-letter code: Large ribosomal subunit protein uL1 (229 aa).

It belongs to the universal ribosomal protein uL1 family. As to quaternary structure, part of the 50S ribosomal subunit.

Functionally, binds directly to 23S rRNA. The L1 stalk is quite mobile in the ribosome, and is involved in E site tRNA release. Its function is as follows. Protein L1 is also a translational repressor protein, it controls the translation of the L11 operon by binding to its mRNA. This is Large ribosomal subunit protein uL1 from Clostridium acetobutylicum (strain ATCC 824 / DSM 792 / JCM 1419 / IAM 19013 / LMG 5710 / NBRC 13948 / NRRL B-527 / VKM B-1787 / 2291 / W).